We begin with the raw amino-acid sequence, 323 residues long: THO complex subunit 6 homolog (323 aa).

WD repeat units lie at residues 6–45 (LLHMSVFSQSFSPCGRYLAAGNNYGEIAVFSLSAALSPDA), 58–96 (AHDGPVFSLLSTESHLLSAGNGEISAWSWAELIKKSTKA), 108–147 (LEIPEINAMIINPKDNNLIVGGGDNNIHIMDMETGTFKSV), 150–189 (GHTDYIHCLSFKEREGEILSGGEDGAVRIWDSRTNRPVHC), 200–238 (RPQFGKWISCLATDSDWMLCGGGPSLSLWHLRSMSPTSV), and 279–321 (CSPS…ALSL).

It belongs to the WD repeat THOC6 family. Component of the THO subcomplex, which is composed of thoc1, thoc2, thoc3, thoc5, thoc6 and thoc7. Component of the transcription/export (TREX) complex at least composed of alyref/thoc4, ddx39b, sarnp/cip29, chtop and the THO subcomplex.

Its subcellular location is the nucleus. It is found in the nucleus speckle. Functionally, component of the THO subcomplex of the TREX complex which is thought to couple mRNA transcription, processing and nuclear export, and which specifically associates with spliced mRNA and not with unspliced pre-mRNA. Plays a key structural role in the oligomerization of the THO-DDX39B complex. TREX is recruited to spliced mRNAs by a transcription-independent mechanism, binds to mRNA upstream of the exon-junction complex (EJC) and is recruited in a splicing- and cap-dependent manner to a region near the 5' end of the mRNA where it functions in mRNA export to the cytoplasm via the TAP/NXF1 pathway. Plays a role in apoptosis negative control involved in brain development. The chain is THO complex subunit 6 homolog (thoc6) from Danio rerio (Zebrafish).